The primary structure comprises 869 residues: DNA mismatch repair protein MutS (869 aa).

Gly618–Ser625 provides a ligand contact to ATP.

It belongs to the DNA mismatch repair MutS family.

This protein is involved in the repair of mismatches in DNA. It is possible that it carries out the mismatch recognition step. This protein has a weak ATPase activity. The protein is DNA mismatch repair protein MutS of Zymomonas mobilis subsp. mobilis (strain ATCC 31821 / ZM4 / CP4).